Consider the following 179-residue polypeptide: Large ribosomal subunit protein uL6 (179 aa).

Belongs to the universal ribosomal protein uL6 family. In terms of assembly, part of the 50S ribosomal subunit.

Its function is as follows. This protein binds to the 23S rRNA, and is important in its secondary structure. It is located near the subunit interface in the base of the L7/L12 stalk, and near the tRNA binding site of the peptidyltransferase center. The polypeptide is Large ribosomal subunit protein uL6 (Synechocystis sp. (strain ATCC 27184 / PCC 6803 / Kazusa)).